Reading from the N-terminus, the 266-residue chain is Vitamin B12-binding protein (266 aa).

The signal sequence occupies residues 1–22 (MAKSLFRALVALSFLAPLWLNA). One can recognise a Fe/B12 periplasmic-binding domain in the interval 25–266 (RVITLSPANT…QLCNALSQVD (242 aa)). Cyanocob(III)alamin contacts are provided by residues Y50 and 242–246 (DWFER). The cysteines at positions 183 and 259 are disulfide-linked.

It belongs to the BtuF family. In terms of assembly, the complex is composed of two ATP-binding proteins (BtuD), two transmembrane proteins (BtuC) and a solute-binding protein (BtuF).

The protein resides in the periplasm. Functionally, part of the ABC transporter complex BtuCDF involved in vitamin B12 import. Binds vitamin B12 and delivers it to the periplasmic surface of BtuC. The chain is Vitamin B12-binding protein (btuF) from Escherichia coli (strain K12).